We begin with the raw amino-acid sequence, 823 residues long: Bifunctional enzyme flvA (823 aa).

The segment at 56–535 (TAKFEMALMP…QRLYDAKFYI (480 aa)) is pyridoxal 5'-phosphate-dependent lyase. N6-(pyridoxal phosphate)lysine is present on K331. The alpha-ketoglutarate-dependent oxygenase stretch occupies residues 573 to 823 (DFDALQQVSH…TLPMNVPLWL (251 aa)). Fe cation-binding residues include H703 and D705.

The protein in the N-terminal section; belongs to the trans-sulfuration enzymes family. It in the C-terminal section; belongs to the iron/ascorbate-dependent oxidoreductase family. Pyridoxal 5'-phosphate serves as cofactor. The cofactor is Fe(2+).

It catalyses the reaction O-acetyl-L-homoserine + 3-methyl-2-oxobutanoate = (6S)-6-amino-3,3-dimethyl-2-oxoheptanedioate + acetate + H(+). It carries out the reaction (6S)-3,3-dimethylpiperidine-2,6-dicarboxylate + 2-oxoglutarate + AH2 + O2 + H(+) = (2S)-5,5-dimethylpiperidine-2-carboxylate + succinate + A + 2 CO2 + H2O. It functions in the pathway secondary metabolite biosynthesis; terpenoid biosynthesis. Functionally, bifunctional enzyme; part of the gene cluster that mediates the biosynthesis of flavunoidine, an alkaloidal terpenoid with a tetracyclic cage-like core connected to dimethylcadaverine via a C-N bond and acylated with 5,5-dimethyl-L-pipecolate. The tetracyclic core is synthesized by the terpene cyclase flvE and the cytochrome P450 monooxygenase flvD. The terpene cyclase flvE catalyzes the cyclization of farnesyl pyrophosphate (FPP) to form (1R,4R,5S)-(+)-acoradiene and the cytochrome P450 monooxygenase flvD is then responsible for oxidative conversion of (1R,4R,5S)-(+)-acoradiene into the tetracyclic cage present in the final product flavunoidine. In parallel, the N-methyltransferase flvH dimethylates L-lysine to give N,N-dimethyl-L-Lysin which is decarboxylated by flvG to afford dimethylcadaverine. The terpene cyclase-like protein flvF is the enzyme that attaches the dimethylcadaverine precusor at the C-7 of the tetracyclic cage to yield pre-flavunoidine. The cytochrome monooxygenase flvC hydroxylates the C-10 position of pre-flavunoidine whereas the NRPS flvI acylates the terpenoid core at the hydroxylated C-10 with dimethylpipecolate to yield final flavunoidine. The bifunctional enzyme flvA and the dehydrogenase flvB are responsible for the synthesis of the dimethylpipecolate precursor. The PLP-dependent lyase domain of flvA might use L-O-acetyl-homoserine and alpha-keto-isovalerate to form an intermediary ketone that can cyclize intramolecularly to yield an imine. The imine can be reduced by flvB to yield the 6-carboxylated pipecolate. The C-terminal alpha-KG-dependent oxygenase domain of flvA is then proposed to catalyze the decarboxylation to yield dimethylpipecolate. The polypeptide is Bifunctional enzyme flvA (Aspergillus flavus (strain ATCC 200026 / FGSC A1120 / IAM 13836 / NRRL 3357 / JCM 12722 / SRRC 167)).